Reading from the N-terminus, the 238-residue chain is MDKIQILRKISQTLFFIYFVFLTSFCLCFFGIIEKFILKGSVGQLIAKLVVIVVLTLILGRVFCGWMCPLGFLFELMYKLRMKLFMKKKLPTVNEEVHNKLIYLRYVVLILSLVLTYYLSIYAFCQVCPIGFLTNLYGTVISLIILIFFLSLSFFVPMAFCRYFCPLGAFLSIFSIKPFFQLKTNNNCVKCKLCEFKCPMQIKITEKLDQKECIRCFECKSSCKKDALSFSYAFKKRS.

Transmembrane regions (helical) follow at residues 13-33 (TLFF…FGII), 40-60 (GSVG…LILG), 107-127 (VVLI…FCQV), and 140-160 (VISL…PMAF). 2 consecutive 4Fe-4S ferredoxin-type domains span residues 178 to 208 (PFFQ…TEKL) and 204 to 233 (ITEK…FSYA). 8 residues coordinate [4Fe-4S] cluster: cysteine 188, cysteine 191, cysteine 194, cysteine 198, cysteine 213, cysteine 216, cysteine 219, and cysteine 223.

The protein resides in the cell membrane. This is an uncharacterized protein from Methanocaldococcus jannaschii (strain ATCC 43067 / DSM 2661 / JAL-1 / JCM 10045 / NBRC 100440) (Methanococcus jannaschii).